The primary structure comprises 265 residues: 3-methyl-2-oxobutanoate hydroxymethyltransferase (265 aa).

Residues D45 and D84 each coordinate Mg(2+). 3-methyl-2-oxobutanoate is bound by residues 45-46 (DS), D84, and K112. Mg(2+) is bound at residue E114. E181 (proton acceptor) is an active-site residue.

It belongs to the PanB family. Homodecamer; pentamer of dimers. Mg(2+) serves as cofactor.

Its subcellular location is the cytoplasm. The enzyme catalyses 3-methyl-2-oxobutanoate + (6R)-5,10-methylene-5,6,7,8-tetrahydrofolate + H2O = 2-dehydropantoate + (6S)-5,6,7,8-tetrahydrofolate. Its pathway is cofactor biosynthesis; (R)-pantothenate biosynthesis; (R)-pantoate from 3-methyl-2-oxobutanoate: step 1/2. In terms of biological role, catalyzes the reversible reaction in which hydroxymethyl group from 5,10-methylenetetrahydrofolate is transferred onto alpha-ketoisovalerate to form ketopantoate. The sequence is that of 3-methyl-2-oxobutanoate hydroxymethyltransferase from Yersinia pestis bv. Antiqua (strain Antiqua).